A 418-amino-acid chain; its full sequence is Ankyrin repeat and SOCS box protein 6 (418 aa).

6 ANK repeats span residues 65 to 95 (EGVSNALLKMAELGLTRAAAVLLQSGANLNF), 100 to 129 (TYYTALHIAVLRNQPDMVELLVRHGADINR), 134 to 164 (HESSPLDLASEEPERLPCLQRLLDLGADVNA), 168 to 203 (NGKTALLHALASSDGVQIHNTENIRLLLEGGADVKA), 224 to 253 (CGDKEEAPMINRFCFQVTQLLLAHGADPSE), and 258 to 287 (ESLTHICLKSFKLHFPLLCFLLESGAAYNC). Residues 358 to 413 (ALHASLRQLESYPPPLKHLCRVSIRLCLRPWPVDTKVKALPLPDRLKWYLLSAHSD) enclose the SOCS box domain.

This sequence belongs to the ankyrin SOCS box (ASB) family. In terms of assembly, binds APS. Identified in a complex with ELOB and ELOC. Interacts with CUL5 and RNF7. Interacts with SQSTM1. In terms of tissue distribution, detected in adipocytes.

Its subcellular location is the cytoplasm. It participates in protein modification; protein ubiquitination. Its function is as follows. Probable substrate-recognition component of a SCF-like ECS (Elongin-Cullin-SOCS-box protein) E3 ubiquitin-protein ligase complex which mediates the ubiquitination and subsequent proteasomal degradation of target proteins. May play a role in the regulation of cell proliferation and autophagy by promoting the ubiquitination and degradation of SQSTM1. This is Ankyrin repeat and SOCS box protein 6 (Asb6) from Mus musculus (Mouse).